A 793-amino-acid polypeptide reads, in one-letter code: E3 UFM1-protein ligase 1 (793 aa).

Ala-2 is subject to N-acetylalanine. The tract at residues 2 to 200 is mediates interaction with DDRGK1; it reads ADAWEEIRRL…RGLFSAITRP (199 aa). The segment at 2-212 is required for E3 UFM1-protein ligase activity; the sequence is ADAWEEIRRL…VNSLISKYGF (211 aa). The segment at 121 to 250 is involved in CDK5RAP3-binding; the sequence is DRLAEEVNDK…KAVFVPDIYS (130 aa). The interval 200–400 is mediates interaction with TRIP4; the sequence is PTAVNSLISK…NPVHLITEED (201 aa). A disordered region spans residues 407 to 473; it reads LESVSTSKKD…SSHTGKKKPE (67 aa). Arg-433 carries the post-translational modification Omega-N-methylarginine. Position 458 is a phosphoserine (Ser-458). Positions 490–684 are mediates interaction with CDK5RAP3; the sequence is IQDAPEEFIS…QLKVTEDPAL (195 aa). Thr-536 is subject to Phosphothreonine.

The protein belongs to the UFL1 family. As to quaternary structure, catalytic component of the UFM1 ribosome E3 ligase (UREL) complex, composed of UFL1, DDRGK1 and CDK5RAP3. Interacts with E2-like enzyme UFC1. Interacts with RELA. Interacts with NBN; promoting recruitment to double-strand breaks following DNA damage. Interacts (when phosphorylated) with YWHAG/14-3-3-gamma; sequestering UFL1 and preventing its association with PDCD1/PD-1 substrate. Ubiquitinated, leading to its degradation by the proteasome. Interaction with CDK5RAP3 protects both proteins against ubiquitination and degradation via the proteasome. In terms of processing, phosphorylation at Thr-536 by AMPK promotes its interaction with YWHAG/14-3-3-gamma, thereby preventing UFL1 association with PDCD1/PD-1 substrate.

It is found in the endoplasmic reticulum membrane. The protein localises to the cytoplasm. It localises to the cytosol. The protein resides in the nucleus. Its subcellular location is the chromosome. E3 protein ligase that mediates ufmylation, the covalent attachment of the ubiquitin-like modifier UFM1 to lysine residues on target proteins, and which plays a key role in various processes, such as ribosome recycling, response to DNA damage, interferon response or reticulophagy (also called ER-phagy). Catalyzes ufmylation of many protein, such as CD274/PD-L1, CDK5RAP3, CYB5R3, DDRGK1, EIF6, histone H4, MRE11, P4HB, PDCD1/PD-1, TRIP4, RPN1, RPS20/uS10, RPL10/uL16, RPL26/uL24, SYVN1/HRD1 and TP53/p53. As part of the UREL complex, plays a key role in ribosome recycling by catalyzing mono-ufmylation of RPL26/uL24 subunit of the 60S ribosome. Ufmylation of RPL26/uL24 occurs on free 60S ribosomes following ribosome dissociation: it weakens the junction between post-termination 60S subunits and SEC61 translocons, promoting release and recycling of the large ribosomal subunit from the endoplasmic reticulum membrane. Ufmylation of RPL26/uL24 and subsequent 60S ribosome recycling either take place after normal termination of translation or after ribosome stalling during cotranslational translocation at the endoplasmic reticulum. Involved in reticulophagy in response to endoplasmic reticulum stress by mediating ufmylation of proteins such as CYB5R3 and RPN1, thereby promoting lysosomal degradation of ufmylated proteins. Ufmylation in response to endoplasmic reticulum stress is essential for processes such as hematopoiesis, blood vessel morphogenesis or inflammatory response. Mediates ufmylation of DDRGK1 and CDK5RAP3; the role of these modifications is however unclear: as both DDRGK1 and CDK5RAP3 act as substrate adapters for ufmylation, it is uncertain whether ufmylation of these proteins is, a collateral effect or is required for ufmylation. Acts as a negative regulator of T-cell activation by mediating ufmylation and stabilization of PDCD1/PD-1. Also involved in the response to DNA damage: recruited to double-strand break sites following DNA damage and mediates monoufmylation of histone H4 and ufmylation of MRE11. Mediates ufmylation of TP53/p53, promoting its stability. Catalyzes ufmylation of TRIP4, thereby playing a role in nuclear receptor-mediated transcription. Required for hematopoietic stem cell function and hematopoiesis. The polypeptide is E3 UFM1-protein ligase 1 (Macaca fascicularis (Crab-eating macaque)).